The chain runs to 431 residues: MSPRVGVTLSGRYRLQRLIATGGMGQVWEAVDNRLGRRVAVKVLKSEFSSDPEFIERFRAEARTTAMLNHPGIASVHDYGESQMNGEGRTAYLVMELVNGEPLNSVLKRTGRLSLRHALDMLEQTGRALQIAHAAGLVHRDVKPGNILITPTGQVKITDFGIAKAVDAAPVTQTGMVMGTAQYIAPEQALGHDASPASDVYSLGVVGYEAVSGKRPFAGDGALTVAMKHIKEPPPPLPPDLPPNVRELIEITLVKNPAMRYRSGGPFADAVAAVRAGRRPPRPSQTPPPGRAAPAAIPSGTTARVAANSAGRTAASRRSRPATGGHRPPRRTFSSGQRALLWAAGVLGALAIIIAVLLVIKAPGDNSPQQAPTPTVTTTGNPPASNTGGTDASPRLNWTERGETRHSGLQSWVVPPTPHSRASLARYEIAQ.

The Cytoplasmic segment spans residues 1 to 339; sequence MSPRVGVTLS…RRTFSSGQRA (339 aa). Positions 13–272 constitute a Protein kinase domain; sequence YRLQRLIATG…SGGPFADAVA (260 aa). Residues 19–27 and lysine 42 each bind ATP; that span reads IATGGMGQV. The active-site Proton acceptor is aspartate 141. The segment at 276–333 is disordered; the sequence is AGRRPPRPSQTPPPGRAAPAAIPSGTTARVAANSAGRTAASRRSRPATGGHRPPRRTF. A compositionally biased stretch (pro residues) spans 282–291; it reads RPSQTPPPGR. Over residues 292–314 the composition is skewed to low complexity; it reads AAPAAIPSGTTARVAANSAGRTA. The helical transmembrane segment at 340–360 threads the bilayer; sequence LLWAAGVLGALAIIIAVLLVI. The Extracellular portion of the chain corresponds to 361 to 431; it reads KAPGDNSPQQ…ASLARYEIAQ (71 aa). Residues 366 to 418 are disordered; sequence NSPQQAPTPTVTTTGNPPASNTGGTDASPRLNWTERGETRHSGLQSWVVPPTP. Positions 368 to 384 are enriched in low complexity; sequence PQQAPTPTVTTTGNPPA.

Belongs to the protein kinase superfamily. Ser/Thr protein kinase family. In terms of processing, autophosphorylated.

Its subcellular location is the cell membrane. It catalyses the reaction L-seryl-[protein] + ATP = O-phospho-L-seryl-[protein] + ADP + H(+). It carries out the reaction L-threonyl-[protein] + ATP = O-phospho-L-threonyl-[protein] + ADP + H(+). Functionally, protein kinase that regulates many aspects of mycobacterial physiology. Is a key component of a signal transduction pathway that regulates cell growth, cell shape and cell division via phosphorylation of target proteins. This Mycobacterium bovis (strain ATCC BAA-935 / AF2122/97) protein is Serine/threonine-protein kinase PknA (pknA).